The chain runs to 145 residues: ATP synthase epsilon chain (145 aa).

The tract at residues 100–123 is disordered; sequence RAQRAKQRAEDAIKTASEKHDSDE. Over residues 106-123 the composition is skewed to basic and acidic residues; it reads QRAEDAIKTASEKHDSDE.

It belongs to the ATPase epsilon chain family. F-type ATPases have 2 components, CF(1) - the catalytic core - and CF(0) - the membrane proton channel. CF(1) has five subunits: alpha(3), beta(3), gamma(1), delta(1), epsilon(1). CF(0) has three main subunits: a, b and c.

It is found in the cell membrane. Functionally, produces ATP from ADP in the presence of a proton gradient across the membrane. The chain is ATP synthase epsilon chain from Latilactobacillus sakei subsp. sakei (strain 23K) (Lactobacillus sakei subsp. sakei).